Here is a 110-residue protein sequence, read N- to C-terminus: Protein YcgL (110 aa).

Positions M14–L98 constitute a YcgL domain. The segment at P87–R110 is disordered. Over residues H97–R110 the composition is skewed to polar residues.

This Salmonella newport (strain SL254) protein is Protein YcgL.